An 88-amino-acid chain; its full sequence is UPF0297 protein BPUM_2379 (88 aa).

It belongs to the UPF0297 family.

The sequence is that of UPF0297 protein BPUM_2379 from Bacillus pumilus (strain SAFR-032).